The primary structure comprises 328 residues: Lipoyl synthase (328 aa).

Cys56, Cys61, Cys67, Cys82, Cys86, Cys89, and Ser298 together coordinate [4Fe-4S] cluster. The region spanning 68-287 is the Radical SAM core domain; that stretch reads WEDREATFLI…KEEAEEIGFS (220 aa).

This sequence belongs to the radical SAM superfamily. Lipoyl synthase family. [4Fe-4S] cluster serves as cofactor.

Its subcellular location is the cytoplasm. It carries out the reaction [[Fe-S] cluster scaffold protein carrying a second [4Fe-4S](2+) cluster] + N(6)-octanoyl-L-lysyl-[protein] + 2 oxidized [2Fe-2S]-[ferredoxin] + 2 S-adenosyl-L-methionine + 4 H(+) = [[Fe-S] cluster scaffold protein] + N(6)-[(R)-dihydrolipoyl]-L-lysyl-[protein] + 4 Fe(3+) + 2 hydrogen sulfide + 2 5'-deoxyadenosine + 2 L-methionine + 2 reduced [2Fe-2S]-[ferredoxin]. It functions in the pathway protein modification; protein lipoylation via endogenous pathway; protein N(6)-(lipoyl)lysine from octanoyl-[acyl-carrier-protein]: step 2/2. Functionally, catalyzes the radical-mediated insertion of two sulfur atoms into the C-6 and C-8 positions of the octanoyl moiety bound to the lipoyl domains of lipoate-dependent enzymes, thereby converting the octanoylated domains into lipoylated derivatives. The sequence is that of Lipoyl synthase from Streptomyces avermitilis (strain ATCC 31267 / DSM 46492 / JCM 5070 / NBRC 14893 / NCIMB 12804 / NRRL 8165 / MA-4680).